Reading from the N-terminus, the 107-residue chain is UPF0060 membrane protein Atu1058 (107 aa).

The next 4 membrane-spanning stretches (helical) occupy residues 5–25 (LIYVLAAVAEIAGCFSFWAWL), 32–52 (WILLPGMVALAAFAWLLTLVA), 59–79 (AYAAYGGIYIAASLFWLWGVE), and 85–105 (RWDIAGGVVCLAGTAIILFGP).

This sequence belongs to the UPF0060 family.

The protein resides in the cell inner membrane. The polypeptide is UPF0060 membrane protein Atu1058 (Agrobacterium fabrum (strain C58 / ATCC 33970) (Agrobacterium tumefaciens (strain C58))).